The primary structure comprises 608 residues: Protein FAM151A (608 aa).

A helical membrane pass occupies residues 14-34; the sequence is WILAGSVSMTLVLAISMILGL. Residues 588 to 608 form a disordered region; sequence RHRPSSRTGPSYVEGFPGESR.

It belongs to the menorin family.

It localises to the membrane. This is Protein FAM151A (Fam151a) from Rattus norvegicus (Rat).